Consider the following 324-residue polypeptide: Beta-ketoacyl-[acyl-carrier-protein] synthase III (324 aa).

Residues cysteine 114 and histidine 251 contribute to the active site. An ACP-binding region spans residues 252 to 256 (QANLR). Asparagine 281 is a catalytic residue.

It belongs to the thiolase-like superfamily. FabH family. Homodimer.

Its subcellular location is the cytoplasm. The catalysed reaction is malonyl-[ACP] + acetyl-CoA + H(+) = 3-oxobutanoyl-[ACP] + CO2 + CoA. It functions in the pathway lipid metabolism; fatty acid biosynthesis. In terms of biological role, catalyzes the condensation reaction of fatty acid synthesis by the addition to an acyl acceptor of two carbons from malonyl-ACP. Catalyzes the first condensation reaction which initiates fatty acid synthesis and may therefore play a role in governing the total rate of fatty acid production. Possesses both acetoacetyl-ACP synthase and acetyl transacylase activities. Its substrate specificity determines the biosynthesis of branched-chain and/or straight-chain of fatty acids. The protein is Beta-ketoacyl-[acyl-carrier-protein] synthase III of Rhodobacter capsulatus (Rhodopseudomonas capsulata).